A 1274-amino-acid chain; its full sequence is MENGHMNGVRTHHDRNSWTNGVNGGVAKREGSPDKGKAHANMSGSSVMMNGGGASFMDVDSQPPGGTKFNDLPDEIQHITADIMPLSLLLTRLSQWTHTKLQDEIAYLASKPLPQGVLNGTTNHQSADNHDTSQESLEKKVHLLNFLQDMHSKWVKTLVITEWSRKAAQVGALIDIRVHLLTKQAHYQELFWELIRMKQDLHWAKVPGPDLKTALEVLTTGQASWMPELGYIEPPPITWEEKEAFIDNINTMLSVRLTFDEHEKLPAAFRDYNIANGRVTFKVKGEFEVDLTIGDEDFEQQFWFIDFRFLFTPAPAELSHGVRTFLENKVNTILGDQGLAGCYNYLHEFVLTQKIIEFRRQATELAMGRWVDTLKVEKLNRAMSIQYWLKPPHGLEGPSSQTAKSWILLGVWSGKGVEGDLDSKPSSYISLRWFRDNKEVKDFDIPLNVETISAEKLLTAVIASHVEYILRSISSKLLSKPRFAQKHARLDLEISKEEPQNSSLAVQLFDNDKAVIKIEPLTGFFTMFPRSPVFLKGQMKLNTSSNVAEEGANLMEQLRFDHAVKDLNSRVRSIGWFVCRPPITQEETKTIVYSDASGSREAFKAVWLRKANWMTRQWFVMISMSLGGDQWWLVDLSPPKPNFPAGRLRLFTKMPMTSNQLTLSDTFFRNLSVYAAGMISHITDLRKLHTLKKSHTALELPNHSLPPQVRLPTIYVRLSEMLQQRPGSSSRTLTWAKDFVPIIFKGVRSHTGDQEGPADATAVRRDTPASIRAEARLTVIDRNKFKSLRGNVDHDVVYNHRTGQFSLKLRADMGTPVVDLLADRVQALERLMEFVEAIRLAGSNAIPQSVALREVVFTYSNDPAEPVVGPPQGPRAWNVHLDLPKDAKVVLTLEKGNPHIRALDMLQDMAQSTKTELLPSYLPFSLPLYRVLDRIEDEWESIAAKNAGNVAIVVKAAEWVTVRFTLPAPTTRRLLCLDIKTMGRKGRLLWHVKRTDEKGHERPLNAPQDEFDTLLQRSVWHAHGDGRKTFGTSAAADPKVGIETLLWSISESVKSLVGTLPPPPGTSPHPGGGTQDLQQGPQKTPQEMVAAQAAQAAQAAQAAQGMPPQRPKQQPPTPSQPQQQHRNVNQPQAQAQPQLHTQVQLQQAQVAQLQAQRQAQARANNSSNNNNTFVNRAHPGQPPQQRQSGPQTQAQQQQQRYQIQQQAQAMQRMQQQQQQQAAQQHAQQQGQGPQGQRSVHGQAGPQGVPQGQPGHGGGANGGMGGKNAPVVVID.

Disordered stretches follow at residues 1–40 (MENGHMNGVRTHHDRNSWTNGVNGGVAKREGSPDKGKAHA), 1056–1142 (LVGT…LHTQ), and 1155–1274 (AQRQ…VVID). Residues 27–37 (AKREGSPDKGK) are compositionally biased toward basic and acidic residues. A compositionally biased stretch (polar residues) spans 1075 to 1085 (QDLQQGPQKTP). Low complexity predominate over residues 1090 to 1104 (AAQAAQAAQAAQAAQ). Over residues 1108 to 1119 (PQRPKQQPPTPS) the composition is skewed to pro residues. Low complexity-rich tracts occupy residues 1120–1142 (QPQQQHRNVNQPQAQAQPQLHTQ), 1155–1172 (AQRQAQARANNSSNNNNT), and 1183–1252 (PQQR…PQGQ). Positions 1253 to 1265 (PGHGGGANGGMGG) are enriched in gly residues.

This sequence belongs to the Mediator complex subunit 14 family. As to quaternary structure, component of the Mediator complex.

The protein resides in the nucleus. Component of the Mediator complex, a coactivator involved in the regulated transcription of nearly all RNA polymerase II-dependent genes. Mediator functions as a bridge to convey information from gene-specific regulatory proteins to the basal RNA polymerase II transcription machinery. Mediator is recruited to promoters by direct interactions with regulatory proteins and serves as a scaffold for the assembly of a functional preinitiation complex with RNA polymerase II and the general transcription factors. This chain is Mediator of RNA polymerase II transcription subunit 14 (rgr1), found in Neurospora crassa (strain ATCC 24698 / 74-OR23-1A / CBS 708.71 / DSM 1257 / FGSC 987).